An 840-amino-acid polypeptide reads, in one-letter code: Phosphatidylglycerol lysyltransferase (840 aa).

At 1–8 (MNQEVKNK) the chain is on the cytoplasmic side. The helical transmembrane segment at 9–29 (IFSILKITFATALFIFVVITL) threads the bilayer. Residues 30 to 52 (YRELSGINFKDTLVEFSKINRMS) lie on the Extracellular side of the membrane. The chain crosses the membrane as a helical span at residues 53 to 73 (LVLLFIGGGASLVILSMYDVI). The Cytoplasmic segment spans residues 74 to 89 (LSRALKMDISLGKVLR). Residues 90-110 (VSYIINALNAIVGFGGFIGAG) form a helical membrane-spanning segment. Topologically, residues 111-128 (VRAMVYKNYTHDKKKLVH) are extracellular. A helical membrane pass occupies residues 129–149 (FISLILISMLTGLSLLSLLIV). Residues 150–161 (FHVFDASLILDK) are Cytoplasmic-facing. A helical membrane pass occupies residues 162–182 (ITWVRWVLYVVSFFLPLFIIY). Over 183-200 (SMVRPPDKNNRFVGLYCT) the chain is Extracellular. Residues 201 to 221 (LVSCVEWLAAAVVLYFCGVIV) traverse the membrane as a helical segment. At 222–229 (DAHVSFMS) the chain is on the cytoplasmic side. A helical membrane pass occupies residues 230-250 (FIAIFIIAALSGLVSFIPGGF). The Extracellular segment spans residues 251–271 (GAFDLVVLLGFKTLGVPEEKV). The helical transmembrane segment at 272 to 292 (LLMLLLYRFAYYFVPVIIALI) threads the bilayer. The Cytoplasmic segment spans residues 293–337 (LSSFEFGTSAKKYIEGSKYFIPAKDVTSFLMSYQKDIIAKIPSLS). The chain crosses the membrane as a helical span at residues 338 to 358 (LAILVFFTSMIFFVNNLTIVY). Over 359–369 (DALYDGNHLTY) the chain is Extracellular. Residues 370-390 (YILLAIHTSACLLLLLNVVGI) form a helical membrane-spanning segment. Topologically, residues 391 to 394 (YKQS) are cytoplasmic. Transmembrane regions (helical) follow at residues 395–415 (RRAIIFAMISILLITVATFFT) and 416–436 (YASYILITWLAIIFVLLIVAF). Residues 437 to 450 (RRARRLKRPVRMRN) lie on the Cytoplasmic side of the membrane. The helical transmembrane segment at 451–471 (IVAMLLFSLFILYVNHIFIAG) threads the bilayer. The Extracellular portion of the chain corresponds to 472–489 (TLYALDIYTIEMHTSVLR). The helical transmembrane segment at 490–510 (YYFWLTILIIAIIIGMIAWLF) threads the bilayer. Residues 511–840 (DYQFSKVRIS…SKVMRVIRHK (330 aa)) are Cytoplasmic-facing.

Belongs to the LPG synthase family.

Its subcellular location is the cell membrane. It catalyses the reaction L-lysyl-tRNA(Lys) + a 1,2-diacyl-sn-glycero-3-phospho-(1'-sn-glycerol) = a 1,2-diacyl-sn-glycero-3-phospho-1'-(3'-O-L-lysyl)-sn-glycerol + tRNA(Lys). In terms of biological role, catalyzes the transfer of a lysyl group from L-lysyl-tRNA(Lys) to membrane-bound phosphatidylglycerol (PG), which produces lysylphosphatidylglycerol (LPG), a major component of the bacterial membrane with a positive net charge. LPG synthesis contributes to bacterial virulence as it is involved in the resistance mechanism against cationic antimicrobial peptides (CAMP) produces by the host's immune system (defensins, cathelicidins) and by the competing microorganisms (bacteriocins). In fact, the modification of anionic phosphatidylglycerol with positively charged L-lysine results in repulsion of the peptides. The polypeptide is Phosphatidylglycerol lysyltransferase (mprF) (Staphylococcus aureus (strain MSSA476)).